Here is a 506-residue protein sequence, read N- to C-terminus: Putative amidase (506 aa).

Catalysis depends on charge relay system residues Lys-121 and Ser-196. Ser-220 serves as the catalytic Acyl-ester intermediate.

The protein belongs to the amidase family.

The catalysed reaction is a monocarboxylic acid amide + H2O = a monocarboxylate + NH4(+). The polypeptide is Putative amidase (Synechocystis sp. (strain ATCC 27184 / PCC 6803 / Kazusa)).